Reading from the N-terminus, the 525-residue chain is Eukaryotic translation initiation factor 3 subunit L (525 aa).

Residues 1–19 are compositionally biased toward acidic residues; that stretch reads MYTQADEYDGGDAGYEDDY. The tract at residues 1-21 is disordered; sequence MYTQADEYDGGDAGYEDDYSG. The region spanning 296–502 is the PCI domain; it reads DAIRCFSSVL…IHIADTKVDR (207 aa).

The protein belongs to the eIF-3 subunit L family. Component of the eukaryotic translation initiation factor 3 (eIF-3) complex.

It localises to the cytoplasm. In terms of biological role, component of the eukaryotic translation initiation factor 3 (eIF-3) complex, which is involved in protein synthesis of a specialized repertoire of mRNAs and, together with other initiation factors, stimulates binding of mRNA and methionyl-tRNAi to the 40S ribosome. The eIF-3 complex specifically targets and initiates translation of a subset of mRNAs involved in cell proliferation. This chain is Eukaryotic translation initiation factor 3 subunit L, found in Nematostella vectensis (Starlet sea anemone).